The sequence spans 192 residues: Endoribonuclease YbeY (192 aa).

The Zn(2+) site is built by His-109, His-113, and His-119. The tract at residues 142-192 (VGAALREGGPARAAETETSWTRSPTSTSTRSPSGSTARGTRARSSRAGSGR) is disordered. The segment covering 159–180 (TSWTRSPTSTSTRSPSGSTARG) has biased composition (low complexity).

It belongs to the endoribonuclease YbeY family. Requires Zn(2+) as cofactor.

It is found in the cytoplasm. Functionally, single strand-specific metallo-endoribonuclease involved in late-stage 70S ribosome quality control and in maturation of the 3' terminus of the 16S rRNA. The polypeptide is Endoribonuclease YbeY (Anaeromyxobacter sp. (strain Fw109-5)).